The chain runs to 212 residues: N-(5'-phosphoribosyl)anthranilate isomerase (212 aa).

Belongs to the TrpF family.

The enzyme catalyses N-(5-phospho-beta-D-ribosyl)anthranilate = 1-(2-carboxyphenylamino)-1-deoxy-D-ribulose 5-phosphate. Its pathway is amino-acid biosynthesis; L-tryptophan biosynthesis; L-tryptophan from chorismate: step 3/5. The polypeptide is N-(5'-phosphoribosyl)anthranilate isomerase (Myxococcus xanthus (strain DK1622)).